The primary structure comprises 393 residues: NAD(P)H-quinone oxidoreductase subunit H, chloroplastic (393 aa).

It belongs to the complex I 49 kDa subunit family. As to quaternary structure, NDH is composed of at least 16 different subunits, 5 of which are encoded in the nucleus.

It is found in the plastid. Its subcellular location is the chloroplast thylakoid membrane. The enzyme catalyses a plastoquinone + NADH + (n+1) H(+)(in) = a plastoquinol + NAD(+) + n H(+)(out). It carries out the reaction a plastoquinone + NADPH + (n+1) H(+)(in) = a plastoquinol + NADP(+) + n H(+)(out). Functionally, NDH shuttles electrons from NAD(P)H:plastoquinone, via FMN and iron-sulfur (Fe-S) centers, to quinones in the photosynthetic chain and possibly in a chloroplast respiratory chain. The immediate electron acceptor for the enzyme in this species is believed to be plastoquinone. Couples the redox reaction to proton translocation, and thus conserves the redox energy in a proton gradient. The protein is NAD(P)H-quinone oxidoreductase subunit H, chloroplastic of Anthoceros angustus (Hornwort).